Here is a 44-residue protein sequence, read N- to C-terminus: Photosystem I reaction center subunit IX (44 aa).

A helical membrane pass occupies residues 7 to 27 (YLSTAPVLATLWFGSLAGLLI).

Belongs to the PsaJ family.

It is found in the plastid. It localises to the chloroplast thylakoid membrane. Its function is as follows. May help in the organization of the PsaE and PsaF subunits. This is Photosystem I reaction center subunit IX from Calycanthus floridus var. glaucus (Eastern sweetshrub).